The chain runs to 86 residues: Translation machinery-associated protein 10 (86 aa).

Serine 28 and serine 79 each carry phosphoserine. Residues 63-86 (NKTRRGSNSQNNERRLSDLQQYHI) are disordered.

Belongs to the STF2 family. As to quaternary structure, associates with ribosomes.

The protein localises to the cytoplasm. The protein resides in the nucleus. Its function is as follows. May be involved in inhibition of the reverse ATPase reaction of mitochondrial F(1)F(0)-type ATP synthase. This Saccharomyces cerevisiae (strain ATCC 204508 / S288c) (Baker's yeast) protein is Translation machinery-associated protein 10.